The sequence spans 101 residues: Large ribosomal subunit protein uL24 (101 aa).

The protein belongs to the universal ribosomal protein uL24 family. As to quaternary structure, part of the 50S ribosomal subunit.

One of two assembly initiator proteins, it binds directly to the 5'-end of the 23S rRNA, where it nucleates assembly of the 50S subunit. Functionally, one of the proteins that surrounds the polypeptide exit tunnel on the outside of the subunit. The sequence is that of Large ribosomal subunit protein uL24 from Dinoroseobacter shibae (strain DSM 16493 / NCIMB 14021 / DFL 12).